A 457-amino-acid polypeptide reads, in one-letter code: Serine--tRNA ligase (457 aa).

An L-serine-binding site is contributed by 252–254; the sequence is TAE. ATP-binding positions include 283–285 and Val-299; that span reads RKE. Residue Glu-306 participates in L-serine binding. An ATP-binding site is contributed by 370–373; the sequence is EMVS. Thr-406 lines the L-serine pocket.

This sequence belongs to the class-II aminoacyl-tRNA synthetase family. Type-1 seryl-tRNA synthetase subfamily. Homodimer. The tRNA molecule binds across the dimer.

The protein resides in the cytoplasm. It carries out the reaction tRNA(Ser) + L-serine + ATP = L-seryl-tRNA(Ser) + AMP + diphosphate + H(+). The catalysed reaction is tRNA(Sec) + L-serine + ATP = L-seryl-tRNA(Sec) + AMP + diphosphate + H(+). It functions in the pathway aminoacyl-tRNA biosynthesis; selenocysteinyl-tRNA(Sec) biosynthesis; L-seryl-tRNA(Sec) from L-serine and tRNA(Sec): step 1/1. In terms of biological role, catalyzes the attachment of serine to tRNA(Ser). Is also able to aminoacylate tRNA(Sec) with serine, to form the misacylated tRNA L-seryl-tRNA(Sec), which will be further converted into selenocysteinyl-tRNA(Sec). This is Serine--tRNA ligase from Saccharolobus islandicus (strain Y.G.57.14 / Yellowstone #1) (Sulfolobus islandicus).